Consider the following 251-residue polypeptide: Probable transcriptional regulatory protein Mflv_3828 (251 aa).

The protein belongs to the TACO1 family.

It localises to the cytoplasm. This is Probable transcriptional regulatory protein Mflv_3828 from Mycolicibacterium gilvum (strain PYR-GCK) (Mycobacterium gilvum (strain PYR-GCK)).